We begin with the raw amino-acid sequence, 590 residues long: Aspartate--tRNA(Asp/Asn) ligase (590 aa).

L-aspartate is bound at residue Glu-175. Residues 199–202 (QQYK) are aspartate. Positions 221 and 450 each coordinate L-aspartate. An ATP-binding site is contributed by 221–223 (RDE). Glu-484 is an ATP binding site. An L-aspartate-binding site is contributed by Arg-491. Residue 536–539 (GVDR) participates in ATP binding.

It belongs to the class-II aminoacyl-tRNA synthetase family. Type 1 subfamily. Homodimer.

The protein resides in the cytoplasm. It carries out the reaction tRNA(Asx) + L-aspartate + ATP = L-aspartyl-tRNA(Asx) + AMP + diphosphate. In terms of biological role, aspartyl-tRNA synthetase with relaxed tRNA specificity since it is able to aspartylate not only its cognate tRNA(Asp) but also tRNA(Asn). Reaction proceeds in two steps: L-aspartate is first activated by ATP to form Asp-AMP and then transferred to the acceptor end of tRNA(Asp/Asn). This chain is Aspartate--tRNA(Asp/Asn) ligase, found in Bradyrhizobium sp. (strain BTAi1 / ATCC BAA-1182).